The sequence spans 149 residues: Putative mediator of RNA polymerase II transcription subunit 22 (149 aa).

This sequence belongs to the Mediator complex subunit 22 family. In terms of assembly, component of the Mediator complex.

The protein resides in the nucleus. Component of the Mediator complex, a coactivator involved in the regulated transcription of nearly all RNA polymerase II-dependent genes. Mediator functions as a bridge to convey information from gene-specific regulatory proteins to the basal RNA polymerase II transcription machinery. Mediator is recruited to promoters by direct interactions with regulatory proteins and serves as a scaffold for the assembly of a functional preinitiation complex with RNA polymerase II and the general transcription factors. This Dictyostelium discoideum (Social amoeba) protein is Putative mediator of RNA polymerase II transcription subunit 22 (med22).